The sequence spans 449 residues: Bifunctional protein GlmU (449 aa).

Positions 1 to 228 are pyrophosphorylase; it reads MSTALVILAA…EAETLGINSR (228 aa). Residues 8-11, K22, Q75, 80-81, 103-105, G140, E154, N169, and N226 contribute to the UDP-N-acetyl-alpha-D-glucosamine site; these read LAAG, GT, and YGD. D105 provides a ligand contact to Mg(2+). N226 contacts Mg(2+). The segment at 229-249 is linker; that stretch reads ADLAAAEAVFQAHARAELLDI. The tract at residues 250–449 is N-acetyltransferase; sequence GVTLTAPETV…RAKKAAKAKG (200 aa). The UDP-N-acetyl-alpha-D-glucosamine site is built by R315 and K333. H345 (proton acceptor) is an active-site residue. Residues Y348 and N359 each contribute to the UDP-N-acetyl-alpha-D-glucosamine site. Acetyl-CoA is bound by residues A362, 368-369, S387, T405, and R422; that span reads NY.

It in the N-terminal section; belongs to the N-acetylglucosamine-1-phosphate uridyltransferase family. This sequence in the C-terminal section; belongs to the transferase hexapeptide repeat family. As to quaternary structure, homotrimer. Requires Mg(2+) as cofactor.

It is found in the cytoplasm. The catalysed reaction is alpha-D-glucosamine 1-phosphate + acetyl-CoA = N-acetyl-alpha-D-glucosamine 1-phosphate + CoA + H(+). The enzyme catalyses N-acetyl-alpha-D-glucosamine 1-phosphate + UTP + H(+) = UDP-N-acetyl-alpha-D-glucosamine + diphosphate. The protein operates within nucleotide-sugar biosynthesis; UDP-N-acetyl-alpha-D-glucosamine biosynthesis; N-acetyl-alpha-D-glucosamine 1-phosphate from alpha-D-glucosamine 6-phosphate (route II): step 2/2. It participates in nucleotide-sugar biosynthesis; UDP-N-acetyl-alpha-D-glucosamine biosynthesis; UDP-N-acetyl-alpha-D-glucosamine from N-acetyl-alpha-D-glucosamine 1-phosphate: step 1/1. It functions in the pathway bacterial outer membrane biogenesis; LPS lipid A biosynthesis. Functionally, catalyzes the last two sequential reactions in the de novo biosynthetic pathway for UDP-N-acetylglucosamine (UDP-GlcNAc). The C-terminal domain catalyzes the transfer of acetyl group from acetyl coenzyme A to glucosamine-1-phosphate (GlcN-1-P) to produce N-acetylglucosamine-1-phosphate (GlcNAc-1-P), which is converted into UDP-GlcNAc by the transfer of uridine 5-monophosphate (from uridine 5-triphosphate), a reaction catalyzed by the N-terminal domain. This is Bifunctional protein GlmU from Ruegeria sp. (strain TM1040) (Silicibacter sp.).